A 274-amino-acid chain; its full sequence is Penicillin-insensitive murein endopeptidase (274 aa).

The signal sequence occupies residues 1–19; the sequence is MKKTAIALLAWFVSSASLA. Intrachain disulfides connect cysteine 44/cysteine 265, cysteine 187/cysteine 235, and cysteine 216/cysteine 223. Histidine 110, histidine 113, aspartate 120, aspartate 147, and histidine 150 together coordinate Zn(2+). Positions 225–274 are disordered; it reads DQPLPPPGDGCGAELQSWFEPPKPGTTKPEKKTPPPLPPSCQALLDEHVL.

It belongs to the peptidase M74 family. In terms of assembly, dimer. The cofactor is Zn(2+).

The protein localises to the periplasm. Functionally, murein endopeptidase that cleaves the D-alanyl-meso-2,6-diamino-pimelyl amide bond that connects peptidoglycan strands. Likely plays a role in the removal of murein from the sacculus. In Salmonella paratyphi A (strain ATCC 9150 / SARB42), this protein is Penicillin-insensitive murein endopeptidase.